Reading from the N-terminus, the 185-residue chain is Ribosome-recycling factor (185 aa).

The interval 139–159 (IDSLEKDGDVSGDEADRAKKK) is disordered. The span at 141 to 159 (SLEKDGDVSGDEADRAKKK) shows a compositional bias: basic and acidic residues.

It belongs to the RRF family.

It localises to the cytoplasm. Its function is as follows. Responsible for the release of ribosomes from messenger RNA at the termination of protein biosynthesis. May increase the efficiency of translation by recycling ribosomes from one round of translation to another. The polypeptide is Ribosome-recycling factor (Sorangium cellulosum (strain So ce56) (Polyangium cellulosum (strain So ce56))).